The sequence spans 343 residues: uncharacterized protein (343 aa).

The segment at 66–89 (TQNPEPTSASTPPSASASSLPNGA) is disordered. Low complexity predominate over residues 71 to 84 (PTSASTPPSASASS). A helical membrane pass occupies residues 96–116 (GVIAGPIVGVLGGLIVLVIIF). Disordered regions lie at residues 161-191 (GGYQMHSTPWASSPRNSTIPQRSQSFYNDTR) and 252-343 (GRPL…SEHF). The span at 165-188 (MHSTPWASSPRNSTIPQRSQSFYN) shows a compositional bias: polar residues. Over residues 280-289 (SNDDSDETKL) the composition is skewed to basic and acidic residues. Residues 290–299 (KQSSTESSSE) are compositionally biased toward low complexity. 2 stretches are compositionally biased toward basic and acidic residues: residues 301–311 (LDEKDKFDKNS) and 322–333 (SSYEHEISEEHK). The segment covering 334–343 (KHSKKRSEHF) has biased composition (basic residues).

It localises to the golgi apparatus membrane. This is an uncharacterized protein from Schizosaccharomyces pombe (strain 972 / ATCC 24843) (Fission yeast).